The chain runs to 238 residues: tRNA (guanine-N(7)-)-methyltransferase (238 aa).

4 residues coordinate S-adenosyl-L-methionine: Glu-68, Glu-93, Asp-120, and Asp-143. Asp-143 is a catalytic residue. Residues Lys-147, Asp-179, and 216-219 (TKFE) each bind substrate.

It belongs to the class I-like SAM-binding methyltransferase superfamily. TrmB family. Monomer.

The enzyme catalyses guanosine(46) in tRNA + S-adenosyl-L-methionine = N(7)-methylguanosine(46) in tRNA + S-adenosyl-L-homocysteine. It participates in tRNA modification; N(7)-methylguanine-tRNA biosynthesis. In terms of biological role, catalyzes the formation of N(7)-methylguanine at position 46 (m7G46) in tRNA. The protein is tRNA (guanine-N(7)-)-methyltransferase of Edwardsiella ictaluri (strain 93-146).